Reading from the N-terminus, the 238-residue chain is Pyridoxine 5'-phosphate synthase (238 aa).

Asn-7 provides a ligand contact to 3-amino-2-oxopropyl phosphate. 9–10 provides a ligand contact to 1-deoxy-D-xylulose 5-phosphate; it reads DH. Arg-18 contributes to the 3-amino-2-oxopropyl phosphate binding site. The active-site Proton acceptor is His-43. 2 residues coordinate 1-deoxy-D-xylulose 5-phosphate: Arg-45 and His-50. Glu-70 (proton acceptor) is an active-site residue. Residue Thr-100 coordinates 1-deoxy-D-xylulose 5-phosphate. His-190 (proton donor) is an active-site residue. 3-amino-2-oxopropyl phosphate is bound by residues Gly-191 and 212 to 213; that span reads GH.

Belongs to the PNP synthase family. As to quaternary structure, homooctamer; tetramer of dimers.

It is found in the cytoplasm. The catalysed reaction is 3-amino-2-oxopropyl phosphate + 1-deoxy-D-xylulose 5-phosphate = pyridoxine 5'-phosphate + phosphate + 2 H2O + H(+). The protein operates within cofactor biosynthesis; pyridoxine 5'-phosphate biosynthesis; pyridoxine 5'-phosphate from D-erythrose 4-phosphate: step 5/5. Functionally, catalyzes the complicated ring closure reaction between the two acyclic compounds 1-deoxy-D-xylulose-5-phosphate (DXP) and 3-amino-2-oxopropyl phosphate (1-amino-acetone-3-phosphate or AAP) to form pyridoxine 5'-phosphate (PNP) and inorganic phosphate. This is Pyridoxine 5'-phosphate synthase from Prochlorococcus marinus (strain AS9601).